The sequence spans 476 residues: Bifunctional protein GlmU (476 aa).

A pyrophosphorylase region spans residues 1 to 235 (MTALDIIIMA…ALQVAGVNSP (235 aa)). UDP-N-acetyl-alpha-D-glucosamine is bound by residues Lys23, Gln81, 86–87 (GT), 108–110 (SGD), Gly145, Glu160, and Asn233. Residue Asp110 coordinates Mg(2+). Residue Asn233 coordinates Mg(2+). Residues 236-256 (AQLAELERAHQRAQAAALMEQ) form a linker region. The tract at residues 257–476 (GVRLADPARF…WKRPAKQAKG (220 aa)) is N-acetyltransferase. 2 residues coordinate UDP-N-acetyl-alpha-D-glucosamine: Arg351 and Lys369. His381 functions as the Proton acceptor in the catalytic mechanism. Residues Tyr384 and Asn395 each coordinate UDP-N-acetyl-alpha-D-glucosamine. Acetyl-CoA contacts are provided by residues Ala398, 404–405 (NY), Ser423, Gly441, and Arg458.

The protein in the N-terminal section; belongs to the N-acetylglucosamine-1-phosphate uridyltransferase family. In the C-terminal section; belongs to the transferase hexapeptide repeat family. As to quaternary structure, homotrimer. It depends on Mg(2+) as a cofactor.

Its subcellular location is the cytoplasm. The enzyme catalyses alpha-D-glucosamine 1-phosphate + acetyl-CoA = N-acetyl-alpha-D-glucosamine 1-phosphate + CoA + H(+). The catalysed reaction is N-acetyl-alpha-D-glucosamine 1-phosphate + UTP + H(+) = UDP-N-acetyl-alpha-D-glucosamine + diphosphate. It functions in the pathway nucleotide-sugar biosynthesis; UDP-N-acetyl-alpha-D-glucosamine biosynthesis; N-acetyl-alpha-D-glucosamine 1-phosphate from alpha-D-glucosamine 6-phosphate (route II): step 2/2. It participates in nucleotide-sugar biosynthesis; UDP-N-acetyl-alpha-D-glucosamine biosynthesis; UDP-N-acetyl-alpha-D-glucosamine from N-acetyl-alpha-D-glucosamine 1-phosphate: step 1/1. Its pathway is bacterial outer membrane biogenesis; LPS lipid A biosynthesis. Catalyzes the last two sequential reactions in the de novo biosynthetic pathway for UDP-N-acetylglucosamine (UDP-GlcNAc). The C-terminal domain catalyzes the transfer of acetyl group from acetyl coenzyme A to glucosamine-1-phosphate (GlcN-1-P) to produce N-acetylglucosamine-1-phosphate (GlcNAc-1-P), which is converted into UDP-GlcNAc by the transfer of uridine 5-monophosphate (from uridine 5-triphosphate), a reaction catalyzed by the N-terminal domain. The polypeptide is Bifunctional protein GlmU (Acidovorax ebreus (strain TPSY) (Diaphorobacter sp. (strain TPSY))).